The sequence spans 460 residues: MEFSEWYSDILEKAGIYDLRYPIKGCGVYLPYGFKIRRYSFEILRKLLDETNHDETLFPMLIPENLLAKEGEHIKGFEDEVFWVTHGGKTPLEVKLALRPTSETTMYYMMKQWIKVHTDLPMKLYQVVNTFRYETKHTRPLIRLREIMSFKEAHTAHATKEDCDAQITEALNLYGEFFDEICVPYIISKRPEWDKFPGADYTMAFDTIYPDGKTMQIGTVHNLGQNFAKTFELEFETPDGEKDFVYQTCYGISDRAIASLISVHGDEKGLVIPVDVAPIQIVLIPLLFKGKEEIVMDKIKELNNTLKSEFRVHLDDRDIRPGRKYNDWEIKGVPLRIELGPRDIENGQALIVRRDTGEKITVEYSNILEEVEKIVSMYKENLKIKADEKIKNFLTVVNFESDVNALSEKVKAALLENKGIILIPFDESVYNEEFEELIDASVLGQTAYEGKDYISVARTY.

Belongs to the class-II aminoacyl-tRNA synthetase family. ProS type 3 subfamily. Homodimer.

The protein localises to the cytoplasm. The enzyme catalyses tRNA(Pro) + L-proline + ATP = L-prolyl-tRNA(Pro) + AMP + diphosphate. Its function is as follows. Catalyzes the attachment of proline to tRNA(Pro) in a two-step reaction: proline is first activated by ATP to form Pro-AMP and then transferred to the acceptor end of tRNA(Pro). The polypeptide is Proline--tRNA ligase (Methanococcus maripaludis (strain C5 / ATCC BAA-1333)).